The sequence spans 348 residues: Phosphoribosylformylglycinamidine cyclo-ligase (348 aa).

It belongs to the AIR synthase family.

Its subcellular location is the cytoplasm. It carries out the reaction 2-formamido-N(1)-(5-O-phospho-beta-D-ribosyl)acetamidine + ATP = 5-amino-1-(5-phospho-beta-D-ribosyl)imidazole + ADP + phosphate + H(+). It participates in purine metabolism; IMP biosynthesis via de novo pathway; 5-amino-1-(5-phospho-D-ribosyl)imidazole from N(2)-formyl-N(1)-(5-phospho-D-ribosyl)glycinamide: step 2/2. This chain is Phosphoribosylformylglycinamidine cyclo-ligase, found in Geotalea daltonii (strain DSM 22248 / JCM 15807 / FRC-32) (Geobacter daltonii).